A 794-amino-acid polypeptide reads, in one-letter code: Phenylalanine--tRNA ligase beta subunit (794 aa).

The 110-residue stretch at 39-148 folds into the tRNA-binding domain; it reads APAFDNVVVA…SDAPVGQAIR (110 aa). The B5 domain maps to 399–474; it reads PVRKPVLLRT…RLYGYDNIPS (76 aa). The Mg(2+) site is built by Asp452, Asp458, Glu461, and Glu462. The 94-residue stretch at 700–793 folds into the FDX-ACB domain; that stretch reads SKFPPVIRDL…FEQAFGAQLR (94 aa).

The protein belongs to the phenylalanyl-tRNA synthetase beta subunit family. Type 1 subfamily. As to quaternary structure, tetramer of two alpha and two beta subunits. The cofactor is Mg(2+).

Its subcellular location is the cytoplasm. The catalysed reaction is tRNA(Phe) + L-phenylalanine + ATP = L-phenylalanyl-tRNA(Phe) + AMP + diphosphate + H(+). In Dechloromonas aromatica (strain RCB), this protein is Phenylalanine--tRNA ligase beta subunit.